We begin with the raw amino-acid sequence, 204 residues long: Small ribosomal subunit protein uS4 (204 aa).

The interval 25-45 is disordered; the sequence is AVPSRRAYPPGQHGQARKKRS. One can recognise an S4 RNA-binding domain in the interval 92–152; it reads MRLDNIIFRL…NKENSRRLAE (61 aa).

It belongs to the universal ribosomal protein uS4 family. Part of the 30S ribosomal subunit. Contacts protein S5. The interaction surface between S4 and S5 is involved in control of translational fidelity.

One of the primary rRNA binding proteins, it binds directly to 16S rRNA where it nucleates assembly of the body of the 30S subunit. Functionally, with S5 and S12 plays an important role in translational accuracy. The protein is Small ribosomal subunit protein uS4 of Cyanothece sp. (strain PCC 7425 / ATCC 29141).